We begin with the raw amino-acid sequence, 372 residues long: Glutamate 5-kinase (372 aa).

An ATP-binding site is contributed by K9. Positions 49, 136, and 148 each coordinate substrate. ATP contacts are provided by residues 168–169 and 210–216; these read TD and TGGMKSK. The region spanning 276-353 is the PUA domain; that stretch reads AGSIEIDSGA…EEALSLTKRS (78 aa).

Belongs to the glutamate 5-kinase family.

The protein localises to the cytoplasm. The catalysed reaction is L-glutamate + ATP = L-glutamyl 5-phosphate + ADP. The protein operates within amino-acid biosynthesis; L-proline biosynthesis; L-glutamate 5-semialdehyde from L-glutamate: step 1/2. Its function is as follows. Catalyzes the transfer of a phosphate group to glutamate to form L-glutamate 5-phosphate. The polypeptide is Glutamate 5-kinase (Shouchella clausii (strain KSM-K16) (Alkalihalobacillus clausii)).